The chain runs to 751 residues: Photosystem I P700 chlorophyll a apoprotein A1 (751 aa).

8 consecutive transmembrane segments (helical) span residues valine 73 to alanine 96, leucine 159 to histidine 182, leucine 198 to leucine 222, threonine 294 to tyrosine 312, tryptophan 349 to tyrosine 372, leucine 388 to valine 414, alanine 436 to histidine 458, and phenylalanine 533 to leucine 551. 2 residues coordinate [4Fe-4S] cluster: cysteine 575 and cysteine 584. 2 helical membrane-spanning segments follow: residues histidine 591–tryptophan 612 and leucine 665–phenylalanine 687. Histidine 676 contributes to the chlorophyll a' binding site. Residues methionine 684 and tyrosine 692 each contribute to the chlorophyll a site. Phylloquinone is bound at residue tryptophan 693. The helical transmembrane segment at alanine 725–alanine 745 threads the bilayer.

It belongs to the PsaA/PsaB family. As to quaternary structure, the PsaA/B heterodimer binds the P700 chlorophyll special pair and subsequent electron acceptors. PSI consists of a core antenna complex that captures photons, and an electron transfer chain that converts photonic excitation into a charge separation. The eukaryotic PSI reaction center is composed of at least 11 subunits. Requires P700 is a chlorophyll a/chlorophyll a' dimer, A0 is one or more chlorophyll a, A1 is one or both phylloquinones and FX is a shared 4Fe-4S iron-sulfur center. as cofactor.

It localises to the plastid. The protein resides in the chloroplast thylakoid membrane. The catalysed reaction is reduced [plastocyanin] + hnu + oxidized [2Fe-2S]-[ferredoxin] = oxidized [plastocyanin] + reduced [2Fe-2S]-[ferredoxin]. PsaA and PsaB bind P700, the primary electron donor of photosystem I (PSI), as well as the electron acceptors A0, A1 and FX. PSI is a plastocyanin/cytochrome c6-ferredoxin oxidoreductase, converting photonic excitation into a charge separation, which transfers an electron from the donor P700 chlorophyll pair to the spectroscopically characterized acceptors A0, A1, FX, FA and FB in turn. Oxidized P700 is reduced on the lumenal side of the thylakoid membrane by plastocyanin or cytochrome c6. The protein is Photosystem I P700 chlorophyll a apoprotein A1 of Chlorella vulgaris (Green alga).